The following is a 362-amino-acid chain: 3-dehydroquinate synthase (362 aa).

NAD(+) is bound by residues 71–76 (DGEQYK), 105–109 (GVVGD), 129–130 (TT), Lys142, Lys151, and 169–172 (CLKT). Residues Glu184, His247, and His264 each contribute to the Zn(2+) site.

The protein belongs to the sugar phosphate cyclases superfamily. Dehydroquinate synthase family. It depends on NAD(+) as a cofactor. The cofactor is Co(2+). Zn(2+) serves as cofactor.

The protein localises to the cytoplasm. It catalyses the reaction 7-phospho-2-dehydro-3-deoxy-D-arabino-heptonate = 3-dehydroquinate + phosphate. It participates in metabolic intermediate biosynthesis; chorismate biosynthesis; chorismate from D-erythrose 4-phosphate and phosphoenolpyruvate: step 2/7. Its function is as follows. Catalyzes the conversion of 3-deoxy-D-arabino-heptulosonate 7-phosphate (DAHP) to dehydroquinate (DHQ). This chain is 3-dehydroquinate synthase, found in Escherichia coli O157:H7.